The primary structure comprises 362 residues: Nicotinate-nucleotide--dimethylbenzimidazole phosphoribosyltransferase (362 aa).

E321 functions as the Proton acceptor in the catalytic mechanism.

It belongs to the CobT family.

It catalyses the reaction 5,6-dimethylbenzimidazole + nicotinate beta-D-ribonucleotide = alpha-ribazole 5'-phosphate + nicotinate + H(+). It functions in the pathway nucleoside biosynthesis; alpha-ribazole biosynthesis; alpha-ribazole from 5,6-dimethylbenzimidazole: step 1/2. Catalyzes the synthesis of alpha-ribazole-5'-phosphate from nicotinate mononucleotide (NAMN) and 5,6-dimethylbenzimidazole (DMB). The chain is Nicotinate-nucleotide--dimethylbenzimidazole phosphoribosyltransferase from Clostridium tetani (strain Massachusetts / E88).